We begin with the raw amino-acid sequence, 464 residues long: MKVAVVGSGLAGLTAAMSLAKKGIEVTVFGPKPKESNSYLAQAGIAFPISDGDSIISHVTDTIRGGKYLNDVTVVWNVISKSTEAYHFLTSLGIEFTSRELEGGHSFPRIFTIKNETGKYIIPVLEKHAKEMGVNFIRKFAEEVAIHNKKIVGVFVEGELLYFDAVIIASGGFSGLYKFTAGNPWNLGIPIGDLALKGVPLRDIEFIQFHPTGFIGKRTYLISEAVRGAGAKLVTGEGERFVNELETRDVVAREIYRKMLEGKGVFLDATGIEDFKRRFPYIYSFLRREGINPKRDLIPVTPVAHYTIGGISVDIFYRTPIKGLYAIGEAACNGFHGANRLASNSLLECIVSGIEVSRTVIREKPRGERKEAKYHGYEPGNVDEVRDIMWNHAGIIRREESLRLGLKKLEKVEADPRVKILAEAVLKCALAREESRGAHYREDYPYSREEFRRPSIFRVENCML.

FAD-binding positions include 8–11 (SGLA) and 37–44 (NSYLAQAG). Arg248 acts as the Proton donor/acceptor in catalysis. FAD-binding positions include Glu329 and 345 to 346 (SL).

It belongs to the FAD-dependent oxidoreductase 2 family. NadB subfamily. The cofactor is FAD.

It is found in the cytoplasm. It carries out the reaction L-aspartate + O2 = iminosuccinate + H2O2. Its pathway is cofactor biosynthesis; NAD(+) biosynthesis; iminoaspartate from L-aspartate (oxidase route): step 1/1. Catalyzes the oxidation of L-aspartate to iminoaspartate, the first step in the de novo biosynthesis of NAD(+). This Pyrococcus furiosus (strain ATCC 43587 / DSM 3638 / JCM 8422 / Vc1) protein is L-aspartate oxidase (nadB).